Consider the following 168-residue polypeptide: Cell division inhibitor SulA (168 aa).

Positions 106 to 112 (ALLTGNY) are ftsZ binding. The interval 161-168 (KIHSSLYH) is lon protease binding.

Belongs to the SulA family. Interacts with FtsZ. In terms of processing, is rapidly cleaved and degraded by the Lon protease once DNA damage is repaired.

Its function is as follows. Component of the SOS system and an inhibitor of cell division. Accumulation of SulA causes rapid cessation of cell division and the appearance of long, non-septate filaments. In the presence of GTP, binds a polymerization-competent form of FtsZ in a 1:1 ratio, thus inhibiting FtsZ polymerization and therefore preventing it from participating in the assembly of the Z ring. This mechanism prevents the premature segregation of damaged DNA to daughter cells during cell division. The sequence is that of Cell division inhibitor SulA from Serratia proteamaculans (strain 568).